The sequence spans 94 residues: Cell division protein FtsB (94 aa).

Residues 1–3 (MRW) are Cytoplasmic-facing. A helical membrane pass occupies residues 4 to 21 (LTVGLLAAIGLLQYPLWV). At 22–94 (GKGGWLKVWE…VQIPEKVPGK (73 aa)) the chain is on the periplasmic side. Residues 31 to 73 (EYDRQLQQQKEVTRKLEIRNAGLDAEVRDLKQGYDAIEERARF) adopt a coiled-coil conformation.

This sequence belongs to the FtsB family. In terms of assembly, part of a complex composed of FtsB, FtsL and FtsQ.

It is found in the cell inner membrane. Functionally, essential cell division protein. May link together the upstream cell division proteins, which are predominantly cytoplasmic, with the downstream cell division proteins, which are predominantly periplasmic. In Dechloromonas aromatica (strain RCB), this protein is Cell division protein FtsB.